A 229-amino-acid polypeptide reads, in one-letter code: Potassium/proton antiporter CemA (229 aa).

2 consecutive transmembrane segments (helical) span residues 114 to 134 (IIYFIILSGYSILGNQELIIL) and 189 to 209 (IISGLVSTFPVILDTILKYWI).

It belongs to the CemA family.

The protein localises to the plastid. It is found in the chloroplast inner membrane. It catalyses the reaction K(+)(in) + H(+)(out) = K(+)(out) + H(+)(in). Its function is as follows. Contributes to K(+)/H(+) antiport activity by supporting proton efflux to control proton extrusion and homeostasis in chloroplasts in a light-dependent manner to modulate photosynthesis. Prevents excessive induction of non-photochemical quenching (NPQ) under continuous-light conditions. Indirectly promotes efficient inorganic carbon uptake into chloroplasts. The sequence is that of Potassium/proton antiporter CemA from Lotus japonicus (Lotus corniculatus var. japonicus).